A 343-amino-acid polypeptide reads, in one-letter code: Stimulator of interferon genes protein homolog (343 aa).

A glycan (N-linked (GlcNAc...) asparagine) is linked at N84. Transmembrane regions (helical) follow at residues 87-107 and 109-129; these read IYLI…TGNY and NVMP…WSFT. N157 contributes to the 3',2'-cGAMP binding site. N-linked (GlcNAc...) asparagine glycosylation is present at N187. Residues 195–215 form a helical membrane-spanning segment; the sequence is LVILIPDEMFVNGVLESHLLD. Positions 232, 235, 255, 258, and 262 each coordinate 3',2'-cGAMP. 2 N-linked (GlcNAc...) asparagine glycosylation sites follow: N270 and N333.

It belongs to the STING family.

The protein resides in the endoplasmic reticulum membrane. Functionally, facilitator of innate immune signaling that binds cyclic dinucleotides produced in response to infection by bacteria and/or viruses, and promotes the activation of the NF-kappa-B transcription factor Rel (Relish). Recognizes and binds cyclic di-GMP (c-di-GMP), a cyclic dinucleotide messenger produced by bacteria such as L.monocytogenes, leading to activation of the peptidoglycan recognition protein (IMD) signaling pathway and activation of Rel (Relish). Innate immune response is triggered in response to double-stranded RNA from viruses delivered to the cytoplasm: Sting acts by specifically binding cyclic dinucleotides 3',2'-cGAMP and 2',3'-cGAMP produced by cGlr1 and cGlr2 in response to RNA virus in the cytosol. Has a strong preference for 3',2'-cGAMP compared to other cyclic dinucleotides such as 2',3'-cGAMP or 3'3'-c-di-GMP. Upon binding to 3',2'-cGAMP, activates an antiviral immune response, leading to the activation of Rel (Relish). Activated in brain in response to Zika virus infection, leading to autophagy. This is Stimulator of interferon genes protein homolog from Drosophila melanogaster (Fruit fly).